Here is a 64-residue protein sequence, read N- to C-terminus: Translation machinery-associated protein 7 homolog (64 aa).

Residues 1–64 (MTGREGGKKK…TGGIKKSGKK (64 aa)) are disordered. Residues 21–50 (EMDEEDMAFKQKQKEQQKAMEAAKQKAAKG) are a coiled coil. Basic and acidic residues predominate over residues 27-44 (MAFKQKQKEQQKAMEAAK).

Belongs to the TMA7 family.

This is Translation machinery-associated protein 7 homolog from Aedes aegypti (Yellowfever mosquito).